A 479-amino-acid polypeptide reads, in one-letter code: uncharacterized protein (479 aa).

8 consecutive transmembrane segments (helical) span residues 25-45 (VVFV…LFFF), 63-83 (IAMI…LAGG), 110-130 (LFGP…TVIF), 133-153 (GVFN…AGIL), 175-195 (VLSI…VLGI), 229-249 (ILLY…IVWL), 287-307 (LILN…IAFI), and 328-348 (LFAP…LLLL).

In the C-terminal section; belongs to the GatC family.

Its subcellular location is the cell membrane. This is an uncharacterized protein from Mycoplasma pneumoniae (strain ATCC 29342 / M129 / Subtype 1) (Mycoplasmoides pneumoniae).